The following is a 415-amino-acid chain: ATP-dependent RNA helicase RhlB (415 aa).

The Q motif motif lies at 9 to 37 (QRFSDLSLHPIVRDTLAKKGFDFCTPIQA). The 179-residue stretch at 40 to 218 (LPISLNGRDV…FEDMNDPEYI (179 aa)) folds into the Helicase ATP-binding domain. Residue 53 to 60 (AQTGTGKT) participates in ATP binding. Positions 164-167 (DEAD) match the DEAD box motif. Residues 241–389 (DKMALLLTLM…VSQYETEALL (149 aa)) enclose the Helicase C-terminal domain.

The protein belongs to the DEAD box helicase family. RhlB subfamily. Component of the RNA degradosome, which is a multiprotein complex involved in RNA processing and mRNA degradation.

It is found in the cytoplasm. The catalysed reaction is ATP + H2O = ADP + phosphate + H(+). In terms of biological role, DEAD-box RNA helicase involved in RNA degradation. Has RNA-dependent ATPase activity and unwinds double-stranded RNA. The chain is ATP-dependent RNA helicase RhlB from Haemophilus influenzae (strain PittEE).